Consider the following 347-residue polypeptide: NADH-ubiquinone oxidoreductase chain 2 (347 aa).

11 helical membrane passes run 2–22 (SPYV…MTLI), 25–45 (HWLT…PLMT), 56–76 (AIKY…SAIF), 96–116 (FMMT…FWVP), 122–142 (IPLL…ISIF), 149–169 (LNMS…GWGG), 178–197 (ILAY…IMIY), 202–219 (ILNL…FMVL), 241–261 (MIII…TGFM), 278–298 (LAMM…RIIY), and 323–343 (ILPI…TPMF).

Belongs to the complex I subunit 2 family. As to quaternary structure, core subunit of respiratory chain NADH dehydrogenase (Complex I) which is composed of 45 different subunits. Interacts with TMEM242.

Its subcellular location is the mitochondrion inner membrane. The catalysed reaction is a ubiquinone + NADH + 5 H(+)(in) = a ubiquinol + NAD(+) + 4 H(+)(out). Functionally, core subunit of the mitochondrial membrane respiratory chain NADH dehydrogenase (Complex I) which catalyzes electron transfer from NADH through the respiratory chain, using ubiquinone as an electron acceptor. Essential for the catalytic activity and assembly of complex I. The polypeptide is NADH-ubiquinone oxidoreductase chain 2 (Metachirus nudicaudatus (Brown four-eyed opossum)).